The sequence spans 497 residues: Tryptophan decarboxylase 2 (497 aa).

4 residues coordinate pyridoxal 5'-phosphate: alanine 162, serine 163, threonine 257, and asparagine 311. Position 314 is an N6-(pyridoxal phosphate)lysine (lysine 314).

Belongs to the group II decarboxylase family. It depends on pyridoxal 5'-phosphate as a cofactor.

The catalysed reaction is L-tryptophan + H(+) = tryptamine + CO2. In terms of biological role, involved in serotonin biosynthesis. Catalyzes the decarboxylation of L-tryptophan to tryptamine, which is converted to serotonin by tryptamine 5-hydroxylase. May play a minor role in serotonin biosynthetis during senescence. Accumulation of serotonin attenuates leaf senescence. This Oryza sativa subsp. japonica (Rice) protein is Tryptophan decarboxylase 2.